A 495-amino-acid polypeptide reads, in one-letter code: NAD(+)--protein-arginine ADP-ribosyltransferase Tre1 (495 aa).

The segment at 278–309 is disordered; sequence PDLQIKGPTPVKKPEPLQPARQPEKASAPKPV. Residues 315 to 495 form the TR mART core domain; sequence MSLREAVGNQ…VTQFILKEIP (181 aa). Positions 344–495 are ART domain; sequence RSALLTDDQI…VTQFILKEIP (152 aa). Catalysis depends on residues arginine 406, serine 431, and glutamate 466.

This sequence belongs to the Arg-specific ADP-ribosyltransferase family.

The protein resides in the secreted. It is found in the host cytoplasm. It catalyses the reaction L-arginyl-[protein] + NAD(+) = N(omega)-(ADP-D-ribosyl)-L-arginyl-[protein] + nicotinamide + H(+). Toxic component of a contact-dependent interbacterial competition system (also called effector-immunity systems). Acts by ADP-ribosylating a number of target proteins in target cells; E.coli target proteins include FtsZ, EFTu, RNase E, Fis, YegQ, GuaB and IF2. In Pseudomonas putida (strain GB-1), this protein is NAD(+)--protein-arginine ADP-ribosyltransferase Tre1.